The following is a 212-amino-acid chain: Thymidine kinase (212 aa).

ATP is bound by residues 11–18, 43–45, and 86–89; these read SPMNAGKT, DTR, and DEAQ. The active-site Proton acceptor is the Glu87. Phe119 contributes to the substrate binding site. Residues Cys144, Cys147, Cys183, and Cys186 each coordinate Zn(2+).

This sequence belongs to the thymidine kinase family.

It carries out the reaction thymidine + ATP = dTMP + ADP + H(+). The chain is Thymidine kinase (TK) from Encephalitozoon cuniculi (strain GB-M1) (Microsporidian parasite).